The chain runs to 785 residues: Pre-rRNA-processing protein TSR1 homolog (785 aa).

Residues 1–59 form a disordered region; it reads MSTTGHRAGVFKKPSKPHKSWKGKRTKGEITSENRGREGVKQLTRSAHSTHRTISKDAR. Over residues 9 to 25 the composition is skewed to basic residues; that stretch reads GVFKKPSKPHKSWKGKR. Residues 26–40 are compositionally biased toward basic and acidic residues; sequence TKGEITSENRGREGV. The Bms1-type G domain maps to 83 to 243; the sequence is APCLVTVVSL…LRILNETKKK (161 aa). The segment at 307–426 is disordered; that stretch reads PHPLKAHNKT…GETTASEMMF (120 aa). The segment covering 376-409 has biased composition (acidic residues); it reads LDDEDDEDEEDSDEDMDDSDNEEVEDDSEEEEPM.

This sequence belongs to the TRAFAC class translation factor GTPase superfamily. Bms1-like GTPase family. TSR1 subfamily.

The protein resides in the nucleus. It is found in the nucleolus. Functionally, required during maturation of the 40S ribosomal subunit in the nucleolus. This Caenorhabditis elegans protein is Pre-rRNA-processing protein TSR1 homolog (tag-151).